Reading from the N-terminus, the 393-residue chain is uncharacterized protein (393 aa).

Residues lysine 6–isoleucine 47 form a B box-type zinc finger. The Zn(2+) site is built by cysteine 11, histidine 14, cysteine 34, and histidine 39.

This is an uncharacterized protein from Dictyostelium discoideum (Social amoeba).